The sequence spans 61 residues: Small ribosomal subunit protein uS14 (61 aa).

Cys-24, Cys-27, Cys-40, and Cys-43 together coordinate Zn(2+).

The protein belongs to the universal ribosomal protein uS14 family. Zinc-binding uS14 subfamily. As to quaternary structure, part of the 30S ribosomal subunit. Contacts proteins S3 and S10. Requires Zn(2+) as cofactor.

Its function is as follows. Binds 16S rRNA, required for the assembly of 30S particles and may also be responsible for determining the conformation of the 16S rRNA at the A site. The chain is Small ribosomal subunit protein uS14 from Leptospira borgpetersenii serovar Hardjo-bovis (strain JB197).